The sequence spans 513 residues: Ribonuclease Y (513 aa).

A helical transmembrane segment spans residues 6–26 (YIIIAVVIIIICVILGLYVVD). The 86-residue stretch at 203–288 (TVHVVNLPND…EMVEKAKKEV (86 aa)) folds into the KH domain. An HD domain is found at 329–422 (VLKHSIEVSH…VQAADAISAA (94 aa)).

Belongs to the RNase Y family.

It localises to the cell membrane. Functionally, endoribonuclease that initiates mRNA decay. This is Ribonuclease Y from Clostridium botulinum (strain Langeland / NCTC 10281 / Type F).